The chain runs to 213 residues: uncharacterized protein (213 aa).

The helical transmembrane segment at 22 to 42 (WFGLSMVSIAVIFGPLTGAHV) threads the bilayer. Residues 43–45 (NPA) carry the NPA 1 motif. Transmembrane regions (helical) follow at residues 63–83 (VYII…WLLF), 112–132 (NLLS…TLNH), and 138–158 (GVAM…FGGL). The NPA 2 motif lies at 164–166 (NPA). Residues 188–208 (FDYAWVPVLRPVIGAILAAWL) traverse the membrane as a helical segment.

This sequence belongs to the MIP/aquaporin (TC 1.A.8) family.

Its subcellular location is the cell membrane. This is an uncharacterized protein from Haemophilus influenzae (strain ATCC 51907 / DSM 11121 / KW20 / Rd).